The primary structure comprises 209 residues: MKGILGKKVGMTQIFTDKGVVIPVTAVEAGPMVVTQIKTVDKDGYNAIQIGFEDAKEKALNKPKKGHLAAANVLKKHLKEFRVDSVEGYTVGQEIKADVFEAGAKIDVTGISKGKGFQGPIKRHGQSRGPETHGSRYHRRPGSMGACSYPGRVFKNKKLAGHMGSVKVTVQNLEVVKVDADKNLILVKGAIPGAKGSVVTIKEAIKVSK.

A disordered region spans residues 117-142 (FQGPIKRHGQSRGPETHGSRYHRRPG).

The protein belongs to the universal ribosomal protein uL3 family. In terms of assembly, part of the 50S ribosomal subunit. Forms a cluster with proteins L14 and L19.

One of the primary rRNA binding proteins, it binds directly near the 3'-end of the 23S rRNA, where it nucleates assembly of the 50S subunit. In Clostridioides difficile (strain 630) (Peptoclostridium difficile), this protein is Large ribosomal subunit protein uL3.